The sequence spans 476 residues: WD repeat, SAM and U-box domain-containing protein 1 (476 aa).

WD repeat units lie at residues 10–47 (DHGDDVNCCAFSFSLLATCSLDKTIRLYSLRDFTELPH), 52–91 (FHTYAVHCCCFSPSGHILASCSTDGTTVLWNTENGQMLAV), 95–134 (PSGSPVRVCQFSPDSTCLASGAADGTVVLWNAQSYKLYRC), 137–176 (VKDGSLAACAFSPNGSFFVTGSSCGDLTVWDDKMRCLHSE), 178–228 (AHDL…LGFE), 237–276 (GHCAPVLACAFSHDGQMLVSGSVDKSVIVYDTNTENILHT), and 279–318 (QHTRYVTTCAFAPNTLLLATGSMDKTVNIWQFDLETLCQA). The SAM domain maps to 332 to 396 (WSEEDVSTWL…LRKIEELRTK (65 aa)). The 74-residue stretch at 403–476 (GIPDEFICPI…INRWLETHQK (74 aa)) folds into the U-box domain. Threonine 458 carries the phosphothreonine modification.

In Homo sapiens (Human), this protein is WD repeat, SAM and U-box domain-containing protein 1 (WDSUB1).